Here is a 369-residue protein sequence, read N- to C-terminus: Dihydroorotate dehydrogenase (quinone) (369 aa).

FMN-binding positions include A76–K80 and T100. Substrate is bound at residue K80. N125–F129 lines the substrate pocket. Positions 154 and 187 each coordinate FMN. N187 contributes to the substrate binding site. S190 serves as the catalytic Nucleophile. Position 192 (N192) interacts with substrate. FMN-binding residues include K232 and S260. N261–T262 provides a ligand contact to substrate. Residues G282, G311, and Y332–S333 contribute to the FMN site.

This sequence belongs to the dihydroorotate dehydrogenase family. Type 2 subfamily. In terms of assembly, monomer. The cofactor is FMN.

Its subcellular location is the cell membrane. It catalyses the reaction (S)-dihydroorotate + a quinone = orotate + a quinol. Its pathway is pyrimidine metabolism; UMP biosynthesis via de novo pathway; orotate from (S)-dihydroorotate (quinone route): step 1/1. Catalyzes the conversion of dihydroorotate to orotate with quinone as electron acceptor. This chain is Dihydroorotate dehydrogenase (quinone) (pyrD), found in Deinococcus radiodurans (strain ATCC 13939 / DSM 20539 / JCM 16871 / CCUG 27074 / LMG 4051 / NBRC 15346 / NCIMB 9279 / VKM B-1422 / R1).